The sequence spans 365 residues: 5-hydroxytryptamine receptor 1E (365 aa).

Residues 1-21 (MNITNCTTEASMAIRPKTITE) lie on the Extracellular side of the membrane. N2 and N5 each carry an N-linked (GlcNAc...) asparagine glycan. Residues 22-45 (KMLICMTLVVITTLTTLLNLAVIM) form a helical membrane-spanning segment. Residues 46-59 (AIGTTKKLHQPANY) are Cytoplasmic-facing. The chain crosses the membrane as a helical span at residues 60–84 (LICSLAVTDLLVAVLVMPLSIIYIV). Topologically, residues 85–92 (MDRWKLGY) are extracellular. The chain crosses the membrane as a helical span at residues 93-118 (FLCEVWLSVDMTCCTCSILHLCVIAL). A disulfide bridge links C95 with C173. Residues D102 and C106 each contribute to the serotonin site. Residues 119–121 (DRY) carry the DRY motif; important for ligand-induced conformation changes motif. The Cytoplasmic portion of the chain corresponds to 119 to 138 (DRYWAITNAIEYARKRTAKR). The helical transmembrane segment at 139–157 (AALMILTVWTISIFISMPP) threads the bilayer. Residues 158 to 179 (LFWRSHRRLSPPPSQCTIQHDH) are Extracellular-facing. The helical transmembrane segment at 180 to 203 (VIYTIYSTLGAFYIPLTLILILYY) threads the bilayer. Residues 204 to 291 (RIYHAAKSLY…SSTRERKAAR (88 aa)) are Cytoplasmic-facing. The helical transmembrane segment at 292 to 316 (ILGLILGAFILSWLPFFIKELIVGL) threads the bilayer. The Extracellular segment spans residues 317–322 (SIYTVS). A helical membrane pass occupies residues 323 to 345 (SEVADFLTWLGYVNSLINPLLYT). The NPxxY motif; important for ligand-induced conformation changes and signaling signature appears at 340–344 (NPLLY). Over 346-365 (SFNEDFKLAFKKLIRCREHT) the chain is Cytoplasmic.

This sequence belongs to the G-protein coupled receptor 1 family. As to expression, detected in brain.

It is found in the cell membrane. Its function is as follows. G-protein coupled receptor for 5-hydroxytryptamine (serotonin). Also functions as a receptor for various alkaloids and psychoactive substances. Ligand binding causes a conformation change that triggers signaling via guanine nucleotide-binding proteins (G proteins) and modulates the activity of downstream effectors, such as adenylate cyclase. HTR1E is coupled to G(i)/G(o) G alpha proteins and mediates inhibitory neurotransmission by inhibiting adenylate cyclase activity. This Homo sapiens (Human) protein is 5-hydroxytryptamine receptor 1E.